We begin with the raw amino-acid sequence, 457 residues long: MALWGGRFTQAADKRFKDFNDSLRFDYRLAEQDIQGSIGWSKALVKVNVLTIEEQHQLEQALNELLVEVRSNPQAILQDDAEDIHSWVESKLIDKVGNLGKKLHTGRSRNDQVAVDIKLWCKQRVIELQESVRNLQRHLVQTAENTQQAVMPGYTHLQRAQPITFAHWCMAYVEMFDRDYSRLTDAYNRMNTCPLGSGALAGTAYAVDRDSLAHDLSFAFATRNSLDSVSDRDHIVELLSIASLSMAHLSRFAEDMIIFNSGEANFVELSDRVTSGSSLMPQKKNPDACELIRGKTGRVIGSLTSMLITLKGLPLAYNKDMQEDKEGIFDALDTWQNCVDMATFVLDELKVNVERTREAALKGYSNATELADYLVSKGVPFRDSHHIVGETVVYAIEKGKGLEDLTIPEFRQFSEVVGDDVYEILSLQSCLDKRCAKGGVSPLRVAEAIAEAKTRFA.

It belongs to the lyase 1 family. Argininosuccinate lyase subfamily.

It localises to the cytoplasm. The catalysed reaction is 2-(N(omega)-L-arginino)succinate = fumarate + L-arginine. The protein operates within amino-acid biosynthesis; L-arginine biosynthesis; L-arginine from L-ornithine and carbamoyl phosphate: step 3/3. This chain is Argininosuccinate lyase, found in Haemophilus influenzae (strain ATCC 51907 / DSM 11121 / KW20 / Rd).